We begin with the raw amino-acid sequence, 370 residues long: Chorismate synthase (370 aa).

Residues 41–60 (IQGDLDRRKPGTSRHVTQRK) are disordered. Residues arginine 48 and arginine 54 each contribute to the NADP(+) site. FMN contacts are provided by residues 125–127 (RSS), 238–239 (NA), glycine 278, 293–297 (KPTSS), and arginine 319.

Belongs to the chorismate synthase family. In terms of assembly, homotetramer. It depends on FMNH2 as a cofactor.

The enzyme catalyses 5-O-(1-carboxyvinyl)-3-phosphoshikimate = chorismate + phosphate. It participates in metabolic intermediate biosynthesis; chorismate biosynthesis; chorismate from D-erythrose 4-phosphate and phosphoenolpyruvate: step 7/7. In terms of biological role, catalyzes the anti-1,4-elimination of the C-3 phosphate and the C-6 proR hydrogen from 5-enolpyruvylshikimate-3-phosphate (EPSP) to yield chorismate, which is the branch point compound that serves as the starting substrate for the three terminal pathways of aromatic amino acid biosynthesis. This reaction introduces a second double bond into the aromatic ring system. This chain is Chorismate synthase, found in Cupriavidus pinatubonensis (strain JMP 134 / LMG 1197) (Cupriavidus necator (strain JMP 134)).